Reading from the N-terminus, the 759-residue chain is Subtilisin-like protease SBT3.16 (759 aa).

A signal peptide spans 1-33; that stretch reads MELSSLIVPNNKKHFVVVFIGLVLIFKIALITA. The propeptide at 34-119 is activation peptide; sequence ANEKSQIYTV…VTRSKNMKLK (86 aa). Residues 41–118 enclose the Inhibitor I9 domain; sequence YTVHLGERQH…RVTRSKNMKL (78 aa). A Peptidase S8 domain is found at 124 to 608; sequence SDYLGLTSAA…GGLVNPVKVA (485 aa). The Charge relay system role is filled by D153. Residues N186 and N209 are each glycosylated (N-linked (GlcNAc...) asparagine). H229 functions as the Charge relay system in the catalytic mechanism. N371 carries N-linked (GlcNAc...) asparagine glycosylation. The Charge relay system role is filled by S539. N632 and N711 each carry an N-linked (GlcNAc...) asparagine glycan.

It belongs to the peptidase S8 family.

The protein resides in the secreted. The polypeptide is Subtilisin-like protease SBT3.16 (Arabidopsis thaliana (Mouse-ear cress)).